The chain runs to 246 residues: Probable transcriptional regulatory protein ESA_01378 (246 aa).

It belongs to the TACO1 family.

It localises to the cytoplasm. This Cronobacter sakazakii (strain ATCC BAA-894) (Enterobacter sakazakii) protein is Probable transcriptional regulatory protein ESA_01378.